Consider the following 508-residue polypeptide: MGLPWYRVHTVVLNDPGRLIAVHLMHTALVSGWAGSMALYEISVFDPSDPVLNPMWRQGMFVIPFMTRLGVTKSWGGWSITGESVSNPGIWSYEGVATAHILLSGALFMAAIWHWVFWDLELFRDPRTGEPALDLPKIFGIHLFLSGLLCFGFGAFHVTGLYGPGIWVSDPYGITGSVQPVEPAWGPEGFDPFNPGGIASHHIAAGILGILAGLFHLSVRPPQRLYKALRMGNVETVLSSSIAAVFWAAFVVSGTMWYGSAATPIELFGPTRYQWDQGFFQQEIEKRVQGSLASGASLSDAWAKIPEKLSFYDYIGNNPAKGGLFRAGAMNSGDGIAAGWLGHPVFTDKAGNELFVRRMPTFFETFPVLLVDKDGVVRADVPFRRAESKYSIEQVGVSVTFYGGELDGVTFNDPSTVKKYARRAQLGSVFEFDRATLQSDGVFRSSPRGWFTFGHLWFALLFFFGHIWHGARTIFRDVFGGIDPDLDDQVEFGAFQKLGDVTTRRQAV.

The next 6 helical transmembrane spans lie at Ala-21–Ser-36, Ile-101–Trp-115, Gly-140–Phe-156, Ile-203–Ser-218, Val-237–Val-252, and Trp-457–Arg-472.

Belongs to the PsbB/PsbC family. PsbB subfamily. As to quaternary structure, PSII is composed of 1 copy each of membrane proteins PsbA, PsbB, PsbC, PsbD, PsbE, PsbF, PsbH, PsbI, PsbJ, PsbK, PsbL, PsbM, PsbT, PsbX, PsbY, PsbZ, Psb30/Ycf12, at least 3 peripheral proteins of the oxygen-evolving complex and a large number of cofactors. It forms dimeric complexes. Binds multiple chlorophylls. PSII binds additional chlorophylls, carotenoids and specific lipids. is required as a cofactor.

The protein localises to the plastid. The protein resides in the chloroplast thylakoid membrane. In terms of biological role, one of the components of the core complex of photosystem II (PSII). It binds chlorophyll and helps catalyze the primary light-induced photochemical processes of PSII. PSII is a light-driven water:plastoquinone oxidoreductase, using light energy to abstract electrons from H(2)O, generating O(2) and a proton gradient subsequently used for ATP formation. The sequence is that of Photosystem II CP47 reaction center protein from Nephroselmis olivacea (Green alga).